Here is a 174-residue protein sequence, read N- to C-terminus: ATP-dependent protease subunit HslV (174 aa).

Thr2 is an active-site residue. Residues Gly157, Cys160, and Thr163 each contribute to the Na(+) site.

It belongs to the peptidase T1B family. HslV subfamily. A double ring-shaped homohexamer of HslV is capped on each side by a ring-shaped HslU homohexamer. The assembly of the HslU/HslV complex is dependent on binding of ATP.

It is found in the cytoplasm. The catalysed reaction is ATP-dependent cleavage of peptide bonds with broad specificity.. With respect to regulation, allosterically activated by HslU binding. In terms of biological role, protease subunit of a proteasome-like degradation complex believed to be a general protein degrading machinery. The protein is ATP-dependent protease subunit HslV of Shewanella loihica (strain ATCC BAA-1088 / PV-4).